A 318-amino-acid polypeptide reads, in one-letter code: Homoserine O-succinyltransferase (318 aa).

The active-site Acyl-thioester intermediate is Cys-142. Substrate contacts are provided by Lys-163 and Ser-192. The Proton acceptor role is filled by His-235. The active site involves Glu-237. Substrate is bound at residue Arg-249.

The protein belongs to the MetA family.

The protein resides in the cytoplasm. The catalysed reaction is L-homoserine + succinyl-CoA = O-succinyl-L-homoserine + CoA. Its pathway is amino-acid biosynthesis; L-methionine biosynthesis via de novo pathway; O-succinyl-L-homoserine from L-homoserine: step 1/1. Functionally, transfers a succinyl group from succinyl-CoA to L-homoserine, forming succinyl-L-homoserine. This is Homoserine O-succinyltransferase from Shewanella putrefaciens (strain CN-32 / ATCC BAA-453).